Consider the following 274-residue polypeptide: NH(3)-dependent NAD(+) synthetase (274 aa).

Position 46–53 (46–53 (GISGGQDS)) interacts with ATP. Asp52 contributes to the Mg(2+) binding site. Position 140 (Arg140) interacts with deamido-NAD(+). Thr160 contributes to the ATP binding site. Glu165 is a binding site for Mg(2+). Residues Lys173 and Asp180 each contribute to the deamido-NAD(+) site. 2 residues coordinate ATP: Lys189 and Thr211. Residue 260–261 (HK) participates in deamido-NAD(+) binding.

It belongs to the NAD synthetase family. In terms of assembly, homodimer.

The enzyme catalyses deamido-NAD(+) + NH4(+) + ATP = AMP + diphosphate + NAD(+) + H(+). It participates in cofactor biosynthesis; NAD(+) biosynthesis; NAD(+) from deamido-NAD(+) (ammonia route): step 1/1. In terms of biological role, catalyzes the ATP-dependent amidation of deamido-NAD to form NAD. Uses ammonia as a nitrogen source. The protein is NH(3)-dependent NAD(+) synthetase of Pectobacterium carotovorum subsp. carotovorum (strain PC1).